We begin with the raw amino-acid sequence, 156 residues long: Regulatory protein RecX (156 aa).

It belongs to the RecX family.

Its subcellular location is the cytoplasm. Modulates RecA activity. The protein is Regulatory protein RecX of Pseudomonas putida (strain ATCC 700007 / DSM 6899 / JCM 31910 / BCRC 17059 / LMG 24140 / F1).